Consider the following 518-residue polypeptide: GMP synthase [glutamine-hydrolyzing] (518 aa).

In terms of domain architecture, Glutamine amidotransferase type-1 spans 11-203; sequence SILVLDFGSQ…AFDVCQAEAN (193 aa). C88 acts as the Nucleophile in catalysis. Active-site residues include H177 and E179. The 190-residue stretch at 204-393 folds into the GMPS ATP-PPase domain; that stretch reads WSMDDFIDMQ…LGMPSDLVWR (190 aa). ATP is bound at residue 231–237; it reads SGGVDSS.

As to quaternary structure, homodimer.

The catalysed reaction is XMP + L-glutamine + ATP + H2O = GMP + L-glutamate + AMP + diphosphate + 2 H(+). It participates in purine metabolism; GMP biosynthesis; GMP from XMP (L-Gln route): step 1/1. Catalyzes the synthesis of GMP from XMP. This is GMP synthase [glutamine-hydrolyzing] from Lactiplantibacillus plantarum (strain ATCC BAA-793 / NCIMB 8826 / WCFS1) (Lactobacillus plantarum).